The chain runs to 143 residues: Transcriptional regulator SlyA (143 aa).

Residues 2–135 (ESTLGSDLAR…LANLIERLEQ (134 aa)) form the HTH marR-type domain. Positions 49–72 (QIQLAKAIGIEQPSLVRTLDQLED) form a DNA-binding region, H-T-H motif.

It belongs to the SlyA family. As to quaternary structure, homodimer.

Functionally, transcription regulator that can specifically activate or repress expression of target genes. This is Transcriptional regulator SlyA from Edwardsiella ictaluri (strain 93-146).